Here is a 363-residue protein sequence, read N- to C-terminus: Fructose-bisphosphate aldolase C-B (363 aa).

Residues Arg56 and Lys147 each coordinate substrate. Glu188 acts as the Proton acceptor in catalysis. Lys230 acts as the Schiff-base intermediate with dihydroxyacetone-P in catalysis.

This sequence belongs to the class I fructose-bisphosphate aldolase family. As to quaternary structure, homotetramer.

It catalyses the reaction beta-D-fructose 1,6-bisphosphate = D-glyceraldehyde 3-phosphate + dihydroxyacetone phosphate. It functions in the pathway carbohydrate degradation; glycolysis; D-glyceraldehyde 3-phosphate and glycerone phosphate from D-glucose: step 4/4. This chain is Fructose-bisphosphate aldolase C-B (aldocb), found in Danio rerio (Zebrafish).